A 479-amino-acid polypeptide reads, in one-letter code: PRAME family member 19 (479 aa).

An LRR 1 repeat occupies 15–38 (QSLLRDQALAISVLDELPRELFPR). An LRR 1; degenerate repeat occupies 97–124 (RWKLQVLEMRDVDENFWTIWSGARPLSC). One copy of the LRR 2; degenerate repeat lies at 179–203 (HLCCTKVVNYSMNILNFRNILETVY). Residues 204–230 (PDSIQVLEIWNMCWPCMVAEVSRYLSQ) form an LRR 3; degenerate repeat. Residues 231–265 (MKNLRKLFISDGCGYLPSFESQGQLVAEFSSVFLR) form an LRR 4; degenerate repeat. 5 LRR repeats span residues 266–291 (LEYL…IRCL), 292–323 (KSPL…SQLK), 324–342 (QLNL…PLRA), 348–375 (AATL…ALSR), and 376–400 (CSNL…LLRH).

It belongs to the PRAME family.

This Homo sapiens (Human) protein is PRAME family member 19.